The following is a 179-amino-acid chain: Ribosome maturation factor RimM (179 aa).

Residues 100–176 form the PRC barrel domain; that stretch reads KEEFHLLELI…FVIINPPNGL (77 aa).

It belongs to the RimM family. As to quaternary structure, binds ribosomal protein uS19.

Its subcellular location is the cytoplasm. Functionally, an accessory protein needed during the final step in the assembly of 30S ribosomal subunit, possibly for assembly of the head region. Essential for efficient processing of 16S rRNA. May be needed both before and after RbfA during the maturation of 16S rRNA. It has affinity for free ribosomal 30S subunits but not for 70S ribosomes. This chain is Ribosome maturation factor RimM, found in Prochlorococcus marinus (strain MIT 9301).